A 135-amino-acid chain; its full sequence is ATP synthase epsilon chain (135 aa).

Belongs to the ATPase epsilon chain family. In terms of assembly, F-type ATPases have 2 components, CF(1) - the catalytic core - and CF(0) - the membrane proton channel. CF(1) has five subunits: alpha(3), beta(3), gamma(1), delta(1), epsilon(1). CF(0) has three main subunits: a, b and c.

Its subcellular location is the cell inner membrane. Produces ATP from ADP in the presence of a proton gradient across the membrane. The chain is ATP synthase epsilon chain from Brucella abortus (strain S19).